A 127-amino-acid chain; its full sequence is Aspartate 1-decarboxylase (127 aa).

S25 serves as the catalytic Schiff-base intermediate with substrate; via pyruvic acid. S25 is modified (pyruvic acid (Ser)). A substrate-binding site is contributed by T57. The active-site Proton donor is Y58. G73 to A75 serves as a coordination point for substrate.

This sequence belongs to the PanD family. In terms of assembly, heterooctamer of four alpha and four beta subunits. The cofactor is pyruvate. In terms of processing, is synthesized initially as an inactive proenzyme, which is activated by self-cleavage at a specific serine bond to produce a beta-subunit with a hydroxyl group at its C-terminus and an alpha-subunit with a pyruvoyl group at its N-terminus.

It is found in the cytoplasm. The catalysed reaction is L-aspartate + H(+) = beta-alanine + CO2. It functions in the pathway cofactor biosynthesis; (R)-pantothenate biosynthesis; beta-alanine from L-aspartate: step 1/1. Catalyzes the pyruvoyl-dependent decarboxylation of aspartate to produce beta-alanine. The sequence is that of Aspartate 1-decarboxylase from Clostridium botulinum (strain ATCC 19397 / Type A).